A 425-amino-acid chain; its full sequence is GTPase Obg (425 aa).

The Obg domain maps to 1-158 (MFIDKARIFV…RWITLELKMI (158 aa)). The OBG-type G domain maps to 159–330 (ADVGLLGFPN…VIAYVSKMLK (172 aa)). GTP is bound by residues 165–172 (GFPNVGKS), 190–194 (FTTLT), 212–215 (DIPG), 282–285 (NKFD), and 311–313 (SAA). S172 and T192 together coordinate Mg(2+). In terms of domain architecture, OCT spans 344-425 (YRPELDIGTE…IYELEFEFYN (82 aa)).

Belongs to the TRAFAC class OBG-HflX-like GTPase superfamily. OBG GTPase family. As to quaternary structure, monomer. Mg(2+) serves as cofactor.

It localises to the cytoplasm. Functionally, an essential GTPase which binds GTP, GDP and possibly (p)ppGpp with moderate affinity, with high nucleotide exchange rates and a fairly low GTP hydrolysis rate. Plays a role in control of the cell cycle, stress response, ribosome biogenesis and in those bacteria that undergo differentiation, in morphogenesis control. The protein is GTPase Obg of Clostridioides difficile (strain 630) (Peptoclostridium difficile).